The primary structure comprises 239 residues: Ribose-5-phosphate isomerase A (239 aa).

Residues 40-43, 96-99, and 110-113 contribute to the substrate site; these read SGST, DGAD, and KGGG. E119 (proton acceptor) is an active-site residue. Substrate is bound at residue K137.

This sequence belongs to the ribose 5-phosphate isomerase family. In terms of assembly, homodimer.

It carries out the reaction aldehydo-D-ribose 5-phosphate = D-ribulose 5-phosphate. It functions in the pathway carbohydrate degradation; pentose phosphate pathway; D-ribose 5-phosphate from D-ribulose 5-phosphate (non-oxidative stage): step 1/1. In terms of biological role, catalyzes the reversible conversion of ribose-5-phosphate to ribulose 5-phosphate. This is Ribose-5-phosphate isomerase A from Methanococcus maripaludis (strain C5 / ATCC BAA-1333).